The following is a 281-amino-acid chain: MDSAYWSYDNIVPSFRLDGKLVILTGGSGGLAAVVSRALLAKGADVALVDMNLERTQQAARDVLQWGEEQMKGKYESPIGQVSAWSCNIGDAEAVDLTFKAINEHHGKISSVLVNTAGYAENFPAEEYPAKNAENLMKVNGLGSFYVSQAFARPLIQNNMTGSIILIGSMSGTIVNDPQPQCMYNMSKAGVIHLARSLACEWAKYNIRVNTLSPGYILTPLTRNVISGHTEMKTEWESKIPMKRMAEPKEFVGSILYLASESASSYTTGHNLVVDGGYECW.

Residues Leu31 and Asn52 each coordinate NADP(+). Ser169 functions as the Proton donor in the catalytic mechanism. NADP(+) is bound by residues Tyr184, Lys188, Ile217, and Thr219. The active-site Proton acceptor is the Tyr184. The Lowers pKa of active site Tyr role is filled by Lys188.

It belongs to the short-chain dehydrogenases/reductases (SDR) family.

The catalysed reaction is D-arabinitol + NAD(+) = D-ribulose + NADH + H(+). It participates in carbohydrate metabolism; D-arabinitol metabolism. The polypeptide is D-arabinitol 2-dehydrogenase [ribulose-forming] (ARD1) (Candida albicans (strain WO-1) (Yeast)).